The following is a 586-amino-acid chain: Succinate dehydrogenase flavoprotein subunit (586 aa).

FAD is bound by residues 10 to 15 (GGGLAG) and 33 to 48 (SIVP…AQGG). Tele-8alpha-FAD histidine is present on His41. 2 residues coordinate substrate: His236 and Ser250. Arg285 serves as the catalytic Proton acceptor. His352 contributes to the substrate binding site. Glu376 contributes to the FAD binding site. A substrate-binding site is contributed by Arg386. An FAD-binding site is contributed by 391–392 (SL).

Belongs to the FAD-dependent oxidoreductase 2 family. FRD/SDH subfamily. In B.subtilis succinate dehydrogenase forms part of an enzyme complex containing three subunits: a flavoprotein, an iron-sulfur protein and cytochrome b-558. Interacts with FloT. FAD serves as cofactor.

It is found in the cell membrane. It localises to the membrane raft. The catalysed reaction is a quinone + succinate = fumarate + a quinol. The protein operates within carbohydrate metabolism; tricarboxylic acid cycle; fumarate from succinate (bacterial route): step 1/1. This Bacillus subtilis (strain 168) protein is Succinate dehydrogenase flavoprotein subunit (sdhA).